The primary structure comprises 369 residues: H-2 class I histocompatibility antigen, K-K alpha chain (369 aa).

Positions 1–21 are cleaved as a signal peptide; the sequence is MAPCMLLLLLAAALAPTQTRA. Positions 22 to 111 are alpha-1; the sequence is GPHSLRYFHT…ALRYYNQSAG (90 aa). Residues 22–305 are Extracellular-facing; that stretch reads GPHSLRYFHT…EPPPSTVSNT (284 aa). The N-linked (GlcNAc...) asparagine glycan is linked to asparagine 107. The alpha-2 stretch occupies residues 112-203; sequence GSHTFQRMYG…QLGNATLPRT (92 aa). A disulfide bond links cysteine 122 and cysteine 185. Asparagine 197 is a glycosylation site (N-linked (GlcNAc...) asparagine). An alpha-3 region spans residues 204–295; the sequence is DSPKAHVTRH…GLPEPLTLRW (92 aa). The 89-residue stretch at 206-294 folds into the Ig-like C1-type domain; the sequence is PKAHVTRHSR…QGLPEPLTLR (89 aa). Residues cysteine 224 and cysteine 280 are joined by a disulfide bond. The connecting peptide stretch occupies residues 296-305; sequence EPPPSTVSNT. The chain crosses the membrane as a helical span at residues 306 to 328; the sequence is VIIAVLVVLGAAIVTGAVVAFVM. Residues 329–369 are Cytoplasmic-facing; that stretch reads KMRRRNTGGKGGDYALAPGSQTSDLSLPDCKVMVHDPHSLA. Serine 351 and serine 354 each carry phosphoserine.

It belongs to the MHC class I family. As to quaternary structure, heterodimer of an alpha chain and a beta chain (beta-2-microglobulin).

It localises to the membrane. Functionally, involved in the presentation of foreign antigens to the immune system. This is H-2 class I histocompatibility antigen, K-K alpha chain (H2-K1) from Mus musculus (Mouse).